A 171-amino-acid chain; its full sequence is Adenine phosphoribosyltransferase (171 aa).

The protein belongs to the purine/pyrimidine phosphoribosyltransferase family. Homodimer.

The protein resides in the cytoplasm. The enzyme catalyses AMP + diphosphate = 5-phospho-alpha-D-ribose 1-diphosphate + adenine. It participates in purine metabolism; AMP biosynthesis via salvage pathway; AMP from adenine: step 1/1. In terms of biological role, catalyzes a salvage reaction resulting in the formation of AMP, that is energically less costly than de novo synthesis. The chain is Adenine phosphoribosyltransferase from Synechococcus sp. (strain ATCC 27144 / PCC 6301 / SAUG 1402/1) (Anacystis nidulans).